Consider the following 561-residue polypeptide: Potassium-transporting ATPase potassium-binding subunit (561 aa).

Helical transmembrane passes span 5 to 25, 60 to 80, 86 to 106, 131 to 151, 177 to 197, 247 to 267, 281 to 301, 324 to 344, 376 to 396, 415 to 435, 488 to 508, and 537 to 557; these read LAAG…YVPV, YGYA…LYAL, VLPL…NTAV, GLAV…VALI, ILLP…VIQS, PTPV…VSLT, LTLL…TLAA, FGIP…TGAV, GLYG…LLVG, ALSV…TVIL, ALGL…LALA, and GTVV…GPIA.

This sequence belongs to the KdpA family. As to quaternary structure, the system is composed of three essential subunits: KdpA, KdpB and KdpC.

Its subcellular location is the cell membrane. In terms of biological role, part of the high-affinity ATP-driven potassium transport (or Kdp) system, which catalyzes the hydrolysis of ATP coupled with the electrogenic transport of potassium into the cytoplasm. This subunit binds the extracellular potassium ions and delivers the ions to the membrane domain of KdpB through an intramembrane tunnel. The polypeptide is Potassium-transporting ATPase potassium-binding subunit (Rhodococcus opacus (strain B4)).